The primary structure comprises 445 residues: Glycine--tRNA ligase (445 aa).

Residues Arg97 and Glu145 each contribute to the substrate site. ATP contacts are provided by residues 177–179 (RNE), 187–192 (FRTCEF), 262–263 (EV), and 308–311 (GLTR). Position 192–196 (192–196 (FEQME)) interacts with substrate. 304 to 308 (ETSAG) serves as a coordination point for substrate.

This sequence belongs to the class-II aminoacyl-tRNA synthetase family. Homodimer.

It localises to the cytoplasm. The catalysed reaction is tRNA(Gly) + glycine + ATP = glycyl-tRNA(Gly) + AMP + diphosphate. In terms of biological role, catalyzes the attachment of glycine to tRNA(Gly). In Borrelia garinii subsp. bavariensis (strain ATCC BAA-2496 / DSM 23469 / PBi) (Borreliella bavariensis), this protein is Glycine--tRNA ligase.